A 334-amino-acid chain; its full sequence is Beta-ketoacyl-[acyl-carrier-protein] synthase III (334 aa).

Catalysis depends on residues Cys-114 and His-260. An ACP-binding region spans residues 261 to 265 (QANLR). Asn-290 is a catalytic residue.

Belongs to the thiolase-like superfamily. FabH family. As to quaternary structure, homodimer.

The protein localises to the cytoplasm. The catalysed reaction is malonyl-[ACP] + acetyl-CoA + H(+) = 3-oxobutanoyl-[ACP] + CO2 + CoA. It functions in the pathway lipid metabolism; fatty acid biosynthesis. Catalyzes the condensation reaction of fatty acid synthesis by the addition to an acyl acceptor of two carbons from malonyl-ACP. Catalyzes the first condensation reaction which initiates fatty acid synthesis and may therefore play a role in governing the total rate of fatty acid production. Possesses both acetoacetyl-ACP synthase and acetyl transacylase activities. Its substrate specificity determines the biosynthesis of branched-chain and/or straight-chain of fatty acids. The protein is Beta-ketoacyl-[acyl-carrier-protein] synthase III of Clostridium tetani (strain Massachusetts / E88).